A 540-amino-acid polypeptide reads, in one-letter code: Flavin-dependent halogenase ptaM (540 aa).

A signal peptide spans 1-21 (MSVPAQTSVLIVGGGPAGSYA). Residues Gly-14, Ala-17, and Glu-47 each contribute to the FAD site. 4 N-linked (GlcNAc...) asparagine glycosylation sites follow: Asn-159, Asn-192, Asn-204, and Asn-243. Residues Ser-330 and Gly-331 each coordinate chloride. Residues Asn-480, Asn-491, and Asn-523 are each glycosylated (N-linked (GlcNAc...) asparagine).

The protein belongs to the flavin-dependent halogenase family.

Its pathway is secondary metabolite biosynthesis. Flavin-dependent halogenase; part of the gene cluster that mediates the biosynthesis of pestheic acid, a diphenyl ether which is a biosynthetic precursor of the unique chloropupukeananes. The biosynthesis initiates from condensation of acetate and malonate units catalyzed by the non-reducing PKS ptaA. As the ptaA protein is TE/CLC domain-deficient, hydrolysis and Claisen cyclization of the polyketide could be catalyzed by ptaB containing a beta-lactamase domain. The ptaB protein might hydrolyze the thioester bond between the ACP of ptaA and the intermediate to release atrochrysone carboxylic acid, which is spontaneously dehydrated to form endocrocin anthrone. Endocrocin anthrone is then converted to endocrocin, catalyzed by the anthrone oxygenase ptaC. Spontaneous decarboxylation of endocrocin occurs to generate emodin. An O-methyltransferase (ptaH or ptaI) could methylate emodin to form physcion. PtaJ could then catalyze the oxidative cleavage of physcion, and rotation of the intermediate could then afford desmethylisosulochrin. PtaF, a putative NADH-dependent oxidoreductase, might also participate in the oxidative cleavage step. Desmethylisosulochrin is then transformed by another O-methyltransferase (ptaH or ptaI) to form isosulochrin. Chlorination of isosulochrin by ptaM in the cyclohexadienone B ring then produces chloroisosulochrin. PtaE is responsible for the oxidative coupling reactions of both benzophenones isosulochrin and chloroisosulochrin to RES-1214-1 and pestheic acid respectively, regardless of chlorination. The protein is Flavin-dependent halogenase ptaM of Pestalotiopsis fici (strain W106-1 / CGMCC3.15140).